The sequence spans 246 residues: Orotidine 5'-phosphate decarboxylase (246 aa).

Substrate-binding positions include Asp22, Lys44, Asp71–Thr80, Thr130, Arg191, Gln201, Gly221, and Arg222. Residue Lys73 is the Proton donor of the active site.

The protein belongs to the OMP decarboxylase family. Type 1 subfamily. As to quaternary structure, homodimer.

It carries out the reaction orotidine 5'-phosphate + H(+) = UMP + CO2. It participates in pyrimidine metabolism; UMP biosynthesis via de novo pathway; UMP from orotate: step 2/2. Catalyzes the decarboxylation of orotidine 5'-monophosphate (OMP) to uridine 5'-monophosphate (UMP). The protein is Orotidine 5'-phosphate decarboxylase of Neisseria gonorrhoeae (strain ATCC 700825 / FA 1090).